A 262-amino-acid chain; its full sequence is 3-methyl-2-oxobutanoate hydroxymethyltransferase (262 aa).

2 residues coordinate Mg(2+): Asp-42 and Asp-81. 3-methyl-2-oxobutanoate is bound by residues 42 to 43, Asp-81, and Lys-110; that span reads DS. Glu-112 lines the Mg(2+) pocket. The Proton acceptor role is filled by Glu-180.

It belongs to the PanB family. In terms of assembly, homodecamer; pentamer of dimers. The cofactor is Mg(2+).

It is found in the cytoplasm. It catalyses the reaction 3-methyl-2-oxobutanoate + (6R)-5,10-methylene-5,6,7,8-tetrahydrofolate + H2O = 2-dehydropantoate + (6S)-5,6,7,8-tetrahydrofolate. The protein operates within cofactor biosynthesis; (R)-pantothenate biosynthesis; (R)-pantoate from 3-methyl-2-oxobutanoate: step 1/2. In terms of biological role, catalyzes the reversible reaction in which hydroxymethyl group from 5,10-methylenetetrahydrofolate is transferred onto alpha-ketoisovalerate to form ketopantoate. This Legionella pneumophila subsp. pneumophila (strain Philadelphia 1 / ATCC 33152 / DSM 7513) protein is 3-methyl-2-oxobutanoate hydroxymethyltransferase.